We begin with the raw amino-acid sequence, 259 residues long: UPF0246 protein Pmen_1032 (259 aa).

It belongs to the UPF0246 family.

The chain is UPF0246 protein Pmen_1032 from Ectopseudomonas mendocina (strain ymp) (Pseudomonas mendocina).